The chain runs to 266 residues: N-formylglutamate deformylase (266 aa).

It belongs to the N-formylglutamate deformylase family. As to quaternary structure, monomer.

It carries out the reaction N-formyl-L-glutamate + H2O = formate + L-glutamate. The protein operates within amino-acid degradation; L-histidine degradation into L-glutamate; L-glutamate from N-formimidoyl-L-glutamate (deiminase route): step 2/2. Functionally, catalyzes the hydrolysis of N-formyl-L-glutamate to formate and L-glutamate. Shows weak activity with N-formyl-L-glutamine. The protein is N-formylglutamate deformylase of Pseudomonas aeruginosa (strain ATCC 15692 / DSM 22644 / CIP 104116 / JCM 14847 / LMG 12228 / 1C / PRS 101 / PAO1).